The chain runs to 106 residues: UPF0060 membrane protein RL1530 (106 aa).

The next 4 helical transmembrane spans lie at 4 to 24 (IIFAFAALFEIAGCFAFWAWL), 30 to 50 (VWWLAPGMVSLALFAWILTLV), 58 to 78 (TFAAYGGIYILASLLWLWLVE), and 86 to 106 (DIGGALICLAGASLILFAPRG).

Belongs to the UPF0060 family.

It is found in the cell inner membrane. The protein is UPF0060 membrane protein RL1530 of Rhizobium johnstonii (strain DSM 114642 / LMG 32736 / 3841) (Rhizobium leguminosarum bv. viciae).